The following is a 438-amino-acid chain: MAKRLFVKTYGCQMNVYDSARMADVLAPLGYGPADHAEEADMVILNTCHIREKAAEKVFSELGRLRKLQAAKAEAGGRMILAVAGCVAQAEGEEILRRAPFVDIVLGPQTYHRLPEMVAQAARAGGAVLDTEFPAEPKFDFLPEPHAEGTSAFLSVQEGCDKFCTFCVVPYTRGAEYSRPAAAVLAEAATLAAGGVREITLLGQNVNGWHGGEGWGLGRLIRALAEVEGVERIRYTTSHPRDMDDELIRAHAELPQLMPFLHLPVQSGSDRILAAMNRGHDRDTYLRLVDKLKSACPDLALSSDFIVGFPGESDADFEASMDLIRRVGFVQTYSFKYSPRPGTPAAAMETQVPEAVKDERLAQVQALLLDQTMRFNHACVGREMRILLDRPGRHAGQLLGRSPYMQPVHVKAAAHLIGTVVPLRITKVHPNSLEAVPA.

Positions lysine 3–arginine 123 constitute an MTTase N-terminal domain. 6 residues coordinate [4Fe-4S] cluster: cysteine 12, cysteine 48, cysteine 86, cysteine 160, cysteine 164, and cysteine 167. The Radical SAM core domain maps to histidine 146 to arginine 374. The TRAM domain occupies histidine 377 to alanine 438.

Belongs to the methylthiotransferase family. MiaB subfamily. In terms of assembly, monomer. Requires [4Fe-4S] cluster as cofactor.

It is found in the cytoplasm. It catalyses the reaction N(6)-dimethylallyladenosine(37) in tRNA + (sulfur carrier)-SH + AH2 + 2 S-adenosyl-L-methionine = 2-methylsulfanyl-N(6)-dimethylallyladenosine(37) in tRNA + (sulfur carrier)-H + 5'-deoxyadenosine + L-methionine + A + S-adenosyl-L-homocysteine + 2 H(+). In terms of biological role, catalyzes the methylthiolation of N6-(dimethylallyl)adenosine (i(6)A), leading to the formation of 2-methylthio-N6-(dimethylallyl)adenosine (ms(2)i(6)A) at position 37 in tRNAs that read codons beginning with uridine. In Paramagnetospirillum magneticum (strain ATCC 700264 / AMB-1) (Magnetospirillum magneticum), this protein is tRNA-2-methylthio-N(6)-dimethylallyladenosine synthase.